The primary structure comprises 791 residues: AP-1 complex subunit gamma-like 2 (791 aa).

The GAE domain occupies 671–786; it reads APIPSVRVFE…QEIFEVDNLP (116 aa).

The protein belongs to the adaptor complexes large subunit family. In terms of assembly, may interact with AP1S1/Sigma1A-adaptin and AP1S2/Sigma1B-adaptin. Probably does not interact with APB1. Interacts (via GAE domain) with RABEP1, NECAP1, CLINT1 and AFTPH/aftiphilin. Interacts with HBV major surface antigen L. Interacts with HBV core protein C in a ubiquitin-dependent manner. Binds ubiquitin. As to expression, widely expressed.

It is found in the golgi apparatus membrane. It localises to the cytoplasmic vesicle membrane. The protein resides in the endosome membrane. In terms of biological role, may function in protein sorting in late endosomes or multivesucular bodies (MVBs). Involved in MVB-assisted maturation of hepatitis B virus (HBV). The polypeptide is AP-1 complex subunit gamma-like 2 (Ap1g2) (Mus musculus (Mouse)).